A 323-amino-acid chain; its full sequence is tRNA U34 carboxymethyltransferase (323 aa).

Residues lysine 91, tryptophan 105, lysine 110, glycine 130, 181–182 (IE), methionine 196, tyrosine 200, and arginine 315 contribute to the carboxy-S-adenosyl-L-methionine site.

The protein belongs to the class I-like SAM-binding methyltransferase superfamily. CmoB family. As to quaternary structure, homotetramer.

It catalyses the reaction carboxy-S-adenosyl-L-methionine + 5-hydroxyuridine(34) in tRNA = 5-carboxymethoxyuridine(34) in tRNA + S-adenosyl-L-homocysteine + H(+). Functionally, catalyzes carboxymethyl transfer from carboxy-S-adenosyl-L-methionine (Cx-SAM) to 5-hydroxyuridine (ho5U) to form 5-carboxymethoxyuridine (cmo5U) at position 34 in tRNAs. The chain is tRNA U34 carboxymethyltransferase from Enterobacter sp. (strain 638).